The following is a 404-amino-acid chain: MGLFDKHLAYRDAYKAIQDVGANPFKVRFDAVHSPTEGVVDGRPTILLGTNNYLGLTFDEQAIAASVKAVQERGTGTTGSRIANGSFESHVELEQELAKFYGRKHAMVFTTGYQANLGVLSTLVGRGDHLILDADSHASIYDGSRLGHAEVIRFRHNDPEDLAKRLRRLGDAPGERLIVVEGIYSMIGDVAPLKEIAAVKREMGGYLLVDEAHSMGVLGATGRGLAEAAGVEEDVDFIVGTFSKSLGAIGGFCVSDHDDFDVMRVICRPYMFTASLPPAVAASTVTALRRMIEQPELRDRLNRNAKRLYDGLTAMGFLTGPSASPIVAATMPDQERAIAMWNGLLQAGVYLNLALPPATPDSRPLLRASVSAAHTDEQIDAVLKTYGEIGAALGVIEPLKRARA.

Pyridoxal 5'-phosphate-binding positions include 112 to 113, Ser185, His213, and Thr241; that span reads GY. Lys244 bears the N6-(pyridoxal phosphate)lysine mark.

It belongs to the class-II pyridoxal-phosphate-dependent aminotransferase family. It depends on pyridoxal 5'-phosphate as a cofactor.

It localises to the cytoplasm. The enzyme catalyses L-serine + hexadecanoyl-CoA + H(+) = 3-oxosphinganine + CO2 + CoA. The protein operates within lipid metabolism; sphingolipid metabolism. Involved in de novo bacterial ceramide synthesis. Catalyzes the condensation of L-serine with palmitoyl-CoA (hexadecanoyl-CoA) to produce 3-oxosphinganine. Can also condense serine and C16:1-CoA, but shows a preference for palmitoyl-CoA. The polypeptide is Serine palmitoyltransferase (Caulobacter vibrioides (strain NA1000 / CB15N) (Caulobacter crescentus)).